The chain runs to 343 residues: L-threonine 3-dehydrogenase (343 aa).

Position 40 (C40) interacts with Zn(2+). Active-site charge relay system residues include T42 and H45. 6 residues coordinate Zn(2+): H65, E66, C95, C98, C101, and C109. Residues I177, D197, R202, 264–266 (LGI), and 288–289 (IY) each bind NAD(+).

Belongs to the zinc-containing alcohol dehydrogenase family. Homotetramer. The cofactor is Zn(2+).

Its subcellular location is the cytoplasm. The catalysed reaction is L-threonine + NAD(+) = (2S)-2-amino-3-oxobutanoate + NADH + H(+). The protein operates within amino-acid degradation; L-threonine degradation via oxydo-reductase pathway; glycine from L-threonine: step 1/2. Functionally, catalyzes the NAD(+)-dependent oxidation of L-threonine to 2-amino-3-ketobutyrate. This chain is L-threonine 3-dehydrogenase, found in Vibrio vulnificus (strain YJ016).